The chain runs to 354 residues: Probable protein phosphatase 2C 27 (354 aa).

The region spanning 54–319 (RSGDWSDIGG…DNLTAVMVSF (266 aa)) is the PPM-type phosphatase domain. Mn(2+) contacts are provided by D98, G99, D267, and D310.

It belongs to the PP2C family. Mg(2+) is required as a cofactor. The cofactor is Mn(2+).

The enzyme catalyses O-phospho-L-seryl-[protein] + H2O = L-seryl-[protein] + phosphate. It carries out the reaction O-phospho-L-threonyl-[protein] + H2O = L-threonyl-[protein] + phosphate. The protein is Probable protein phosphatase 2C 27 of Oryza sativa subsp. japonica (Rice).